Reading from the N-terminus, the 250-residue chain is Pyridoxine 5'-phosphate synthase (250 aa).

3-amino-2-oxopropyl phosphate is bound by residues asparagine 8 and arginine 19. Histidine 44 acts as the Proton acceptor in catalysis. Residues arginine 46 and histidine 51 each contribute to the 1-deoxy-D-xylulose 5-phosphate site. Glutamate 76 acts as the Proton acceptor in catalysis. Threonine 106 provides a ligand contact to 1-deoxy-D-xylulose 5-phosphate. Residue histidine 200 is the Proton donor of the active site. 3-amino-2-oxopropyl phosphate is bound by residues aspartate 201 and 223–224; that span reads GH.

The protein belongs to the PNP synthase family. In terms of assembly, homooctamer; tetramer of dimers.

It localises to the cytoplasm. It carries out the reaction 3-amino-2-oxopropyl phosphate + 1-deoxy-D-xylulose 5-phosphate = pyridoxine 5'-phosphate + phosphate + 2 H2O + H(+). It participates in cofactor biosynthesis; pyridoxine 5'-phosphate biosynthesis; pyridoxine 5'-phosphate from D-erythrose 4-phosphate: step 5/5. Functionally, catalyzes the complicated ring closure reaction between the two acyclic compounds 1-deoxy-D-xylulose-5-phosphate (DXP) and 3-amino-2-oxopropyl phosphate (1-amino-acetone-3-phosphate or AAP) to form pyridoxine 5'-phosphate (PNP) and inorganic phosphate. This chain is Pyridoxine 5'-phosphate synthase, found in Allorhizobium ampelinum (strain ATCC BAA-846 / DSM 112012 / S4) (Agrobacterium vitis (strain S4)).